Here is a 240-residue protein sequence, read N- to C-terminus: MKERDSRNQIGDLPFRVKEGFSVYEFIEQLYEANVVERINRFLVKVTFNGKEFLAHLHDPGRLKDLIYPGNLVLIRETKGYKTKFSITAAYSNSRFVVLDSRLHNIIASKFLPEAYEKEIKVGNSRIDFKYDNTYLEVKGCTLVENEIAYFPDAPTERGRRHLKELRELMKKGFNAILLILVMRDDAKCFLPNEKTDPKFSIEFWNSIKEGLNVNIKTFKLVGNKIIYVRDIPLCKTNLT.

Belongs to the SfsA family.

In Saccharolobus islandicus (strain M.16.4 / Kamchatka #3) (Sulfolobus islandicus), this protein is Sugar fermentation stimulation protein homolog.